Here is a 119-residue protein sequence, read N- to C-terminus: Membrane-anchored ubiquitin-fold protein 1 (119 aa).

A Ubiquitin-like domain is found at 9–75 (FEIKFRLPDG…LENNKTLSEC (67 aa)). Cys-116 carries the post-translational modification Cysteine methyl ester. The S-farnesyl cysteine moiety is linked to residue Cys-116. The propeptide at 117-119 (SIM) is removed in mature form.

It is found in the cell membrane. Its function is as follows. May serve as docking site to facilitate the association of other proteins to the plasma membrane. The chain is Membrane-anchored ubiquitin-fold protein 1 (MUB1) from Oryza sativa subsp. japonica (Rice).